We begin with the raw amino-acid sequence, 158 residues long: SsrA-binding protein (158 aa).

The protein belongs to the SmpB family.

It localises to the cytoplasm. Its function is as follows. Required for rescue of stalled ribosomes mediated by trans-translation. Binds to transfer-messenger RNA (tmRNA), required for stable association of tmRNA with ribosomes. tmRNA and SmpB together mimic tRNA shape, replacing the anticodon stem-loop with SmpB. tmRNA is encoded by the ssrA gene; the 2 termini fold to resemble tRNA(Ala) and it encodes a 'tag peptide', a short internal open reading frame. During trans-translation Ala-aminoacylated tmRNA acts like a tRNA, entering the A-site of stalled ribosomes, displacing the stalled mRNA. The ribosome then switches to translate the ORF on the tmRNA; the nascent peptide is terminated with the 'tag peptide' encoded by the tmRNA and targeted for degradation. The ribosome is freed to recommence translation, which seems to be the essential function of trans-translation. The sequence is that of SsrA-binding protein from Bartonella tribocorum (strain CIP 105476 / IBS 506).